The chain runs to 217 residues: Imidazole glycerol phosphate synthase subunit HisH (217 aa).

In terms of domain architecture, Glutamine amidotransferase type-1 spans 6 to 214 (QIAVVDYDMG…VTQVAAAQLQ (209 aa)). The active-site Nucleophile is the Cys84. Residues His189 and Glu191 contribute to the active site.

In terms of assembly, heterodimer of HisH and HisF.

The protein localises to the cytoplasm. It catalyses the reaction 5-[(5-phospho-1-deoxy-D-ribulos-1-ylimino)methylamino]-1-(5-phospho-beta-D-ribosyl)imidazole-4-carboxamide + L-glutamine = D-erythro-1-(imidazol-4-yl)glycerol 3-phosphate + 5-amino-1-(5-phospho-beta-D-ribosyl)imidazole-4-carboxamide + L-glutamate + H(+). The catalysed reaction is L-glutamine + H2O = L-glutamate + NH4(+). Its pathway is amino-acid biosynthesis; L-histidine biosynthesis; L-histidine from 5-phospho-alpha-D-ribose 1-diphosphate: step 5/9. Its function is as follows. IGPS catalyzes the conversion of PRFAR and glutamine to IGP, AICAR and glutamate. The HisH subunit catalyzes the hydrolysis of glutamine to glutamate and ammonia as part of the synthesis of IGP and AICAR. The resulting ammonia molecule is channeled to the active site of HisF. This Synechococcus sp. (strain ATCC 27144 / PCC 6301 / SAUG 1402/1) (Anacystis nidulans) protein is Imidazole glycerol phosphate synthase subunit HisH.